The following is a 67-amino-acid chain: Kappa-conotoxin-like 1 (67 aa).

An N-terminal signal peptide occupies residues 1–26; it reads MMFRLTSVSCFLLVIACLNLFQVVLT. 4 disulfide bridges follow: C29/C43, C36/C48, C42/C51, and C47/C55. Position 59 is an isoleucine amide (I59). Positions 63 to 67 are excised as a propeptide; that stretch reads ATFQE.

This sequence belongs to the conotoxin I2 superfamily. In terms of tissue distribution, expressed by the venom duct.

The protein resides in the secreted. In terms of biological role, inhibits the vertebrate voltage-gated potassium channels Kv1.1/KCNA1 and Kv1.3/KCNA3. The chain is Kappa-conotoxin-like 1 from Conus vexillum (Flag cone).